Reading from the N-terminus, the 248-residue chain is Homeotic protein ultrabithorax (248 aa).

Residues glycine 116 to alanine 125 show a composition bias toward gly residues. Residues glycine 116–glycine 191 are disordered. The span at glycine 126–asparagine 139 shows a compositional bias: low complexity. Gly residues-rich tracts occupy residues threonine 140–methionine 152 and glycine 182–glycine 191. Residues phenylalanine 241–alanine 246 carry the Antp-type hexapeptide motif.

Belongs to the Antp homeobox family.

The protein localises to the nucleus. In terms of biological role, sequence-specific transcription factor which is part of a developmental regulatory system that provides cells with specific positional identities on the anterior-posterior axis. Binds the consensus region 5'-TTAAT[GT][GA]-3'. The protein is Homeotic protein ultrabithorax (Ubx) of Musca domestica (House fly).